Here is a 262-residue protein sequence, read N- to C-terminus: MQTIIRVEKLAKTFNQHQALHAVDLNIHHGEMVALLGPSGSGKSTLLRHLSGLIVGDKKPECRVELLGCTVQQNGRLARDIRKSRANTGYIFQQFNLVNRLSVLENVLIGALGSTPFWRTCFSWFTREQKQRALQALTRVGMVHFAHQRVSTLSGGQQQRVAIARALMQQAKVILADEPIASLDPESARIVMDTLRDINQNDGITVVVTLHQVDYALRYCERIVALRQGHVFYDGSSQLFDNDRFDHLYRSINRVEENAKAA.

Positions 5 to 253 constitute an ABC transporter domain; it reads IRVEKLAKTF…RFDHLYRSIN (249 aa). 37–44 is a binding site for ATP; the sequence is GPSGSGKS.

This sequence belongs to the ABC transporter superfamily. Phosphonates importer (TC 3.A.1.9.1) family. As to quaternary structure, the complex is composed of two ATP-binding proteins (PhnC), two transmembrane proteins (PhnE) and a solute-binding protein (PhnD).

The protein resides in the cell inner membrane. It carries out the reaction phosphonate(out) + ATP + H2O = phosphonate(in) + ADP + phosphate + H(+). In terms of biological role, part of the ABC transporter complex PhnCDE involved in phosphonates import. Responsible for energy coupling to the transport system. This chain is Phosphonates import ATP-binding protein PhnC, found in Shigella dysenteriae serotype 1 (strain Sd197).